Here is a 281-residue protein sequence, read N- to C-terminus: Pantothenate synthetase (281 aa).

30-37 (MGALHAGH) is an ATP binding site. The active-site Proton donor is the histidine 37. Residue glutamine 64 coordinates (R)-pantoate. Glutamine 64 is a beta-alanine binding site. Residue 150 to 153 (GKKD) coordinates ATP. Residue glutamine 156 participates in (R)-pantoate binding. ATP contacts are provided by residues valine 179 and 187-190 (YSSR).

It belongs to the pantothenate synthetase family. As to quaternary structure, homodimer.

It localises to the cytoplasm. It carries out the reaction (R)-pantoate + beta-alanine + ATP = (R)-pantothenate + AMP + diphosphate + H(+). Its pathway is cofactor biosynthesis; (R)-pantothenate biosynthesis; (R)-pantothenate from (R)-pantoate and beta-alanine: step 1/1. Catalyzes the condensation of pantoate with beta-alanine in an ATP-dependent reaction via a pantoyl-adenylate intermediate. The sequence is that of Pantothenate synthetase from Akkermansia muciniphila (strain ATCC BAA-835 / DSM 22959 / JCM 33894 / BCRC 81048 / CCUG 64013 / CIP 107961 / Muc).